Consider the following 396-residue polypeptide: Ribosomal RNA large subunit methyltransferase I (396 aa).

The PUA domain occupies 2–81; the sequence is SVRLVLAKGR…ESIDIAFFSR (80 aa).

This sequence belongs to the methyltransferase superfamily. RlmI family.

Its subcellular location is the cytoplasm. The catalysed reaction is cytidine(1962) in 23S rRNA + S-adenosyl-L-methionine = 5-methylcytidine(1962) in 23S rRNA + S-adenosyl-L-homocysteine + H(+). Functionally, specifically methylates the cytosine at position 1962 (m5C1962) of 23S rRNA. This is Ribosomal RNA large subunit methyltransferase I from Escherichia coli O157:H7.